Consider the following 282-residue polypeptide: Pantothenate synthetase (282 aa).

Met30–His37 is an ATP binding site. The Proton donor role is filled by His37. Gln60 provides a ligand contact to (R)-pantoate. Beta-alanine is bound at residue Gln60. An ATP-binding site is contributed by Gly146 to Asp149. Gln152 is a binding site for (R)-pantoate. Residues Ile175 and Lys183 to Arg186 contribute to the ATP site.

It belongs to the pantothenate synthetase family. In terms of assembly, homodimer.

The protein localises to the cytoplasm. The catalysed reaction is (R)-pantoate + beta-alanine + ATP = (R)-pantothenate + AMP + diphosphate + H(+). It participates in cofactor biosynthesis; (R)-pantothenate biosynthesis; (R)-pantothenate from (R)-pantoate and beta-alanine: step 1/1. Functionally, catalyzes the condensation of pantoate with beta-alanine in an ATP-dependent reaction via a pantoyl-adenylate intermediate. This chain is Pantothenate synthetase, found in Campylobacter jejuni subsp. jejuni serotype O:23/36 (strain 81-176).